The sequence spans 269 residues: GRF-interacting factor 10 (269 aa).

A disordered region spans residues 1-71 (MTAEGEAKNP…GEKDDGACRD (71 aa)). Low complexity predominate over residues 22-43 (QQAAPAPAPAQGEVAQEAAVQG). Residues 47–69 (EQERDKADREVQGGAGEKDDGAC) show a composition bias toward basic and acidic residues. The QLQ domain maps to 113–148 (AFTAMQLQELEQQSRVYQYMAARVPVPTHLVFPVWK). The 45-residue stretch at 179 to 223 (EPEPGRCRRTDGKKWRCWRNTIPNEKYCERHMHRGRKRPVQVFLE) folds into the WRC domain. 2 consecutive short sequence motifs (bipartite nuclear localization signal) follow at residues 184 to 194 (RCRRTDGKKWR) and 212 to 216 (RGRKR). The segment at 217–269 (PVQVFLEDDEPDSASGSKPAAPGKATEGAKKADDKSPSSKKLAVAAPAAVQST) is disordered. Positions 243-253 (EGAKKADDKSP) are enriched in basic and acidic residues.

This sequence belongs to the GRF family. In terms of assembly, interacts with GIF1. As to expression, highly expressed in shoots. Expressed in developing leaves.

Its subcellular location is the nucleus. Its function is as follows. Involved in the regulation of cell proliferation in developing shoots and leaves. Does not possess transactivation activity. The protein is GRF-interacting factor 10 of Zea mays (Maize).